Consider the following 87-residue polypeptide: Kappa-5-bungarotoxin (87 aa).

A signal peptide spans M1 to T21. 5 disulfides stabilise this stretch: C24–C42, C35–C63, C48–C52, C67–C79, and C80–C85.

It belongs to the three-finger toxin family. Long-chain subfamily. Kappa-neurotoxin sub-subfamily. As to quaternary structure, homo- and heterodimer; non-covalently linked. As to expression, expressed by the venom gland.

It localises to the secreted. Functionally, postsynaptic neurotoxin that binds and inhibits neuronal nicotinic acetylcholine receptors (nAChR) with high affinity (IC(50)&lt;100 nM). Is a selective, and slowly reversible antagonist of alpha-3/CHRNA3-containing and some alpha-4/CHRNA4-containing AChRs. In Bungarus multicinctus (Many-banded krait), this protein is Kappa-5-bungarotoxin.